Reading from the N-terminus, the 520-residue chain is Succinyl-CoA:3-ketoacid coenzyme A transferase 2A, mitochondrial (520 aa).

A mitochondrion-targeting transit peptide spans 1–39; the sequence is MAALRLLAWAFSRRVSAHRPQPTLPHHLIRHYPTTRCGK. Residues 280–299 are disordered; sequence ERLTTRDSPPAPGSKDQDPK. Residue Glu-342 is the 5-glutamyl coenzyme A thioester intermediate of the active site.

The protein belongs to the 3-oxoacid CoA-transferase family. As to quaternary structure, homodimer. Expressed in flagella of epididymal sperm.

It localises to the mitochondrion. It carries out the reaction a 3-oxo acid + succinyl-CoA = a 3-oxoacyl-CoA + succinate. It participates in ketone metabolism; succinyl-CoA degradation; acetoacetyl-CoA from succinyl-CoA: step 1/1. Functionally, key enzyme for ketone body catabolism. Transfers the CoA moiety from succinate to acetoacetate. Formation of the enzyme-CoA intermediate proceeds via an unstable anhydride species formed between the carboxylate groups of the enzyme and substrate. Probably play and important roles in the energy metabolism of spermatozoa. The chain is Succinyl-CoA:3-ketoacid coenzyme A transferase 2A, mitochondrial (Oxct2a) from Rattus norvegicus (Rat).